The chain runs to 416 residues: Squalene synthase (416 aa).

2 consecutive transmembrane segments (helical) span residues 285 to 304 and 386 to 406; these read VINF…NACY and FISY…FLIA.

Belongs to the phytoene/squalene synthase family. Mg(2+) is required as a cofactor.

Its subcellular location is the endoplasmic reticulum membrane. It carries out the reaction 2 (2E,6E)-farnesyl diphosphate + NADPH + H(+) = squalene + 2 diphosphate + NADP(+). The enzyme catalyses 2 (2E,6E)-farnesyl diphosphate + NADH + H(+) = squalene + 2 diphosphate + NAD(+). It participates in terpene metabolism; lanosterol biosynthesis; lanosterol from farnesyl diphosphate: step 1/3. This is Squalene synthase (fdfT) from Dictyostelium discoideum (Social amoeba).